Reading from the N-terminus, the 97-residue chain is Co-chaperonin GroES (97 aa).

This sequence belongs to the GroES chaperonin family. In terms of assembly, heptamer of 7 subunits arranged in a ring. Interacts with the chaperonin GroEL.

It localises to the cytoplasm. Its function is as follows. Together with the chaperonin GroEL, plays an essential role in assisting protein folding. The GroEL-GroES system forms a nano-cage that allows encapsulation of the non-native substrate proteins and provides a physical environment optimized to promote and accelerate protein folding. GroES binds to the apical surface of the GroEL ring, thereby capping the opening of the GroEL channel. This Klebsiella pneumoniae subsp. pneumoniae (strain ATCC 700721 / MGH 78578) protein is Co-chaperonin GroES.